Reading from the N-terminus, the 111-residue chain is Cell division protein FtsL (111 aa).

The Cytoplasmic portion of the chain corresponds to 1-26 (MAQARTEFSKVAAPRKLEEMYAQRGD). The chain crosses the membrane as a helical span at residues 27–47 (LFPYLLAVLVLLTLVSVFHVW). The Periplasmic portion of the chain corresponds to 48–111 (SRVRVVDLNL…PTDQQVVVVK (64 aa)). Residues 51–85 (RVVDLNLEVAEVARQLKVAQEEQNRLKLEVASLKT) adopt a coiled-coil conformation.

Belongs to the FtsL family.

The protein localises to the cell inner membrane. In terms of biological role, essential cell division protein. The chain is Cell division protein FtsL from Geobacter sulfurreducens (strain ATCC 51573 / DSM 12127 / PCA).